A 71-amino-acid chain; its full sequence is Small ribosomal subunit protein bS21 (71 aa).

This sequence belongs to the bacterial ribosomal protein bS21 family.

The sequence is that of Small ribosomal subunit protein bS21 from Pseudoalteromonas atlantica (strain T6c / ATCC BAA-1087).